The following is a 215-amino-acid chain: Oligoribonuclease (215 aa).

Residues 5 to 170 (LVWIDCEMTG…ADIHESIREL (166 aa)) enclose the Exonuclease domain. Tyr127 is a catalytic residue. Positions 196-215 (LDEGKDAPGPSDSASAPPTG) are disordered. Over residues 202-215 (APGPSDSASAPPTG) the composition is skewed to low complexity.

Belongs to the oligoribonuclease family.

Its subcellular location is the cytoplasm. 3'-to-5' exoribonuclease specific for small oligoribonucleotides. The chain is Oligoribonuclease from Mycobacterium avium (strain 104).